The chain runs to 252 residues: MAEGGAARGTREEQGKLPEQEEEEEEDPQVLLGSGHCKWFNVRMGFGFISMTSREGSPLENPVDVFVHQSKLYMDGFRSLKEGEPVEFTFKKSSKGFESLRVTGPGGNPCLGSERRPKAKTVQKRKPKGDRCYNCGGLDHHAKECNLPPQPKKCHYCQSTMHMVANCPHKIVPQHPTTSQGRYEAEPQPSTSSFQREGGGAFDYSSPSYSQEGRSELSERSSRSPQEASLSKISTSPEEQSRKGPSVQKKKK.

The tract at residues 1 to 30 is disordered; the sequence is MAEGGAARGTREEQGKLPEQEEEEEEDPQV. Over residues 9 to 19 the composition is skewed to basic and acidic residues; it reads GTREEQGKLPE. A CSD domain is found at 32-105; it reads LGSGHCKWFN…GFESLRVTGP (74 aa). CCHC-type zinc fingers lie at residues 130-147 and 152-169; these read DRCY…ECNL and KKCH…NCPH. 8 residues coordinate Zn(2+): C132, C135, H140, C145, C154, C157, H162, and C167. Residues 172 to 252 form a disordered region; it reads VPQHPTTSQG…KGPSVQKKKK (81 aa). Residues 213 to 222 are compositionally biased toward basic and acidic residues; the sequence is GRSELSERSS. Residues 225–238 show a composition bias toward polar residues; it reads PQEASLSKISTSPE.

It belongs to the lin-28 family.

The protein localises to the nucleus. It localises to the nucleolus. In terms of biological role, suppressor of specific microRNA (miRNA) biogenesis. Binds target primary miRNA transcripts and sequester them in the nucleolus, away from the microprocessor complex, hence preventing their processing into mature miRNA. The specific interaction with target pri-miRNAs occurs via an 5'-GGAG-3' motif in the pre-miRNA terminal loop. In Xenopus laevis (African clawed frog), this protein is Protein lin-28 homolog B (lin28b).